The primary structure comprises 477 residues: MSFVWSAAVWVIAVAAVVISKWLYRWSNPKCNGKLPPGSMGLPIIGETCDFFEPHGLYEISPFVKKRMLKYGPLFRTNIFGSNTVVLTEPDIIFEVFRQENKSFVFSYPEAFVKPFGKENVFLKHGNIHKHVKQISLQHLGSEALKKKMIGEIDRVTYEHLRSKANQGSFDAKEAVESVIMAHLTPKIISNLKPETQATLVDNIMALGSEWFQSPLKLTTLISIYKVFIARRYALQVIKDVFTRRKASREMCGDFLDTMVEEGEKEDVIFNEESAINLIFAILVVAKESTSSVTSLAIKFLAENHKALAELKREHAAILQNRNGKGAGVSWEEYRHQMTFTNMVINETLRMANMAPIMYRKAVNDVEIKGYTIPAGWIVAVIPPAVHFNDAIYENPLEFNPWRWEGKELRSGSKTFMVFGGGVRQCVGAEFARLQISIFIHHLVTTYDFSLAQESEFIRAPLPYFPKGLPIKISQSL.

Residues 3–23 form a helical membrane-spanning segment; sequence FVWSAAVWVIAVAAVVISKWL. Cys426 contacts heme.

This sequence belongs to the cytochrome P450 family. It depends on heme as a cofactor. Expressed primarily in the root epidermis.

It is found in the membrane. Its function is as follows. Hydroxylates thalianol into thalian-diol. The sequence is that of Cytochrome P450 708A2 (CYP708A2) from Arabidopsis thaliana (Mouse-ear cress).